The following is a 232-amino-acid chain: Ribonuclease P protein component 3 (232 aa).

This sequence belongs to the eukaryotic/archaeal RNase P protein component 3 family. As to quaternary structure, consists of a catalytic RNA component and at least 4-5 protein subunits.

It is found in the cytoplasm. It catalyses the reaction Endonucleolytic cleavage of RNA, removing 5'-extranucleotides from tRNA precursor.. In terms of biological role, part of ribonuclease P, a protein complex that generates mature tRNA molecules by cleaving their 5'-ends. The polypeptide is Ribonuclease P protein component 3 (Methanococcus maripaludis (strain C7 / ATCC BAA-1331)).